The following is a 321-amino-acid chain: Glucokinase (321 aa).

8–13 (GDVGGT) provides a ligand contact to ATP.

It belongs to the bacterial glucokinase family.

The protein localises to the cytoplasm. The catalysed reaction is D-glucose + ATP = D-glucose 6-phosphate + ADP + H(+). This is Glucokinase from Shigella dysenteriae serotype 1 (strain Sd197).